A 340-amino-acid polypeptide reads, in one-letter code: Aldo-keto reductase yakc [NADP(+)] (340 aa).

The active-site Proton donor is the tyrosine 56. Histidine 126 is a substrate binding site. 208–218 (APLGRGFLTGA) contributes to the NADP(+) binding site.

This sequence belongs to the aldo/keto reductase family. Aldo/keto reductase 2 subfamily. In terms of assembly, monomer.

This is Aldo-keto reductase yakc [NADP(+)] (yakc) from Schizosaccharomyces pombe (strain 972 / ATCC 24843) (Fission yeast).